A 617-amino-acid polypeptide reads, in one-letter code: Chaperone protein DnaK (617 aa).

Thr-175 bears the Phosphothreonine; by autocatalysis mark. Over residues 578-592 the composition is skewed to low complexity; that stretch reads AGAEAQQGAQGTQGA. The segment at 578–617 is disordered; sequence AGAEAQQGAQGTQGADMGGNAQGKDDDNVVDADFKVEDDK. Residues 600–617 show a composition bias toward basic and acidic residues; it reads GKDDDNVVDADFKVEDDK.

Belongs to the heat shock protein 70 family.

Its function is as follows. Acts as a chaperone. The sequence is that of Chaperone protein DnaK from Clostridium novyi (strain NT).